We begin with the raw amino-acid sequence, 519 residues long: Exodeoxyribonuclease 7 large subunit (519 aa).

The disordered stretch occupies residues 500 to 519 (VGRGKTRKPKEEPPAQGSLL).

Belongs to the XseA family. In terms of assembly, heterooligomer composed of large and small subunits.

It is found in the cytoplasm. The catalysed reaction is Exonucleolytic cleavage in either 5'- to 3'- or 3'- to 5'-direction to yield nucleoside 5'-phosphates.. Bidirectionally degrades single-stranded DNA into large acid-insoluble oligonucleotides, which are then degraded further into small acid-soluble oligonucleotides. In Cereibacter sphaeroides (strain ATCC 17029 / ATH 2.4.9) (Rhodobacter sphaeroides), this protein is Exodeoxyribonuclease 7 large subunit.